A 119-amino-acid chain; its full sequence is MGNRAFKSHHGHFLSAEDCKVKTHHGHHDHHTHFHVENHGHHKVAIRTHANKYVSINDNNDVYISHHFHGEHSLFHLEHHGGKVSIKGHNHYYIAADQHGSIYTTHHHHHDATFEEFIV.

Gly-2 carries N-myristoyl glycine lipidation. Residues 8-110 (SHHGHFLSAE…SIYTTHHHHH (103 aa)) are contains several HHXH repeats. 2 repeat units span residues 34–47 (FHVENHGHHKVAIR) and 75–87 (FHLEHHGGKVSIK). Residues 34–87 (FHVENHGHHKVAIRTHANKYVSINDNNDVYISHHFHGEHSLFHLEHHGGKVSIK) form a 2 X 13 AA approximate repeats region.

It belongs to the hisactophilin family. Post-translationally, phosphorylated.

Its subcellular location is the cytoplasm. The protein localises to the cell membrane. In terms of biological role, may act as an intracellular pH sensor that links chemotactic signals to responses in the microfilament system of the cells by nucleating actin polymerization or stabilizing the filaments. The chain is Hisactophilin-3 (hatC) from Dictyostelium discoideum (Social amoeba).